Here is a 388-residue protein sequence, read N- to C-terminus: MTTTPISLTPGVLAEAVVDLGAIAHNVRLLRERAGSAQVMAVVKADGYGHGATAVARTALAAGAVELGVASVDEALTLRADGITAPVLAWLHAPGMDFGPALAADVQIAISSIRQLDEALDAARRTGTTATVTVKIDTGLNRNGVAPALYPEMVTRLRQAVAEDAIRLRGLMTHMVHADAPEKPINDIQSQRFKQMLDHARDQGVRFEVAHLSNSSATMARPDLTLDLVRPGIAVYGLSPVPRLGDMGLVPAMTVKCAVALVKSVSAGEGVSYGHTWIAPHDTNVALLPIGYADGVFRSLGGRLEVLINGKRRPGVGRVCMDQFLVDLGPGPLDVAEGDEAILFGPGTRGEPTAQDWADLVGTIHYEVVTSPRGRITRVYREAETVER.

Lys-44 serves as the catalytic Proton acceptor; specific for D-alanine. Lys-44 bears the N6-(pyridoxal phosphate)lysine mark. Arg-142 serves as a coordination point for substrate. Tyr-273 serves as the catalytic Proton acceptor; specific for L-alanine. Met-321 is a substrate binding site.

The protein belongs to the alanine racemase family. It depends on pyridoxal 5'-phosphate as a cofactor.

The enzyme catalyses L-alanine = D-alanine. Its pathway is amino-acid biosynthesis; D-alanine biosynthesis; D-alanine from L-alanine: step 1/1. Functionally, catalyzes the interconversion of L-alanine and D-alanine. May also act on other amino acids. The chain is Alanine racemase (alr) from Mycobacterium ulcerans (strain Agy99).